The sequence spans 465 residues: Cysteine--tRNA ligase (465 aa).

Cys27 lines the Zn(2+) pocket. A 'HIGH' region motif is present at residues 29-39 (PTVYNFFHIGN). Zn(2+)-binding residues include Cys207, His232, and Glu236. Positions 264–268 (KMSKS) match the 'KMSKS' region motif. An ATP-binding site is contributed by Lys267.

This sequence belongs to the class-I aminoacyl-tRNA synthetase family. In terms of assembly, monomer. It depends on Zn(2+) as a cofactor.

The protein localises to the cytoplasm. It catalyses the reaction tRNA(Cys) + L-cysteine + ATP = L-cysteinyl-tRNA(Cys) + AMP + diphosphate. This is Cysteine--tRNA ligase from Clostridium botulinum (strain 657 / Type Ba4).